The primary structure comprises 219 residues: Vacuolar protein sorting-associated protein 20 homolog 1 (219 aa).

The stretch at 20 to 60 forms a coiled coil; sequence SLKTQRRKLGQYQQKLEKVIEAEKQAARDLIREKRKDRALL. Residues 171–219 are disordered; it reads PEVPTKESEESEKLDLPDVPTKTPVASNAEITPAESATKTKVLEEPLPA. The span at 174–186 shows a compositional bias: basic and acidic residues; sequence PTKESEESEKLDL. Over residues 194–209 the composition is skewed to polar residues; it reads PVASNAEITPAESATK.

The protein belongs to the SNF7 family. Component of the endosomal sorting required for transport complex III (ESCRT-III), composed at least of VPS2, VPS20, VPS24 and VPS32. Interacts with SKD1.

The protein localises to the endosome. Component of the ESCRT-III complex, which is required for multivesicular bodies (MVBs) formation and sorting of endosomal cargo proteins into MVBs. The ESCRT-III complex is probably involved in the concentration of MVB cargo. This chain is Vacuolar protein sorting-associated protein 20 homolog 1 (VPS20.1), found in Arabidopsis thaliana (Mouse-ear cress).